We begin with the raw amino-acid sequence, 298 residues long: UPF0282 protein Kcr_0286 (298 aa).

This sequence belongs to the UPF0282 family.

This chain is UPF0282 protein Kcr_0286, found in Korarchaeum cryptofilum (strain OPF8).